A 968-amino-acid chain; its full sequence is Glycine dehydrogenase (decarboxylating) (968 aa).

Lysine 713 carries the N6-(pyridoxal phosphate)lysine modification.

The protein belongs to the GcvP family. As to quaternary structure, the glycine cleavage system is composed of four proteins: P, T, L and H. Pyridoxal 5'-phosphate is required as a cofactor.

It carries out the reaction N(6)-[(R)-lipoyl]-L-lysyl-[glycine-cleavage complex H protein] + glycine + H(+) = N(6)-[(R)-S(8)-aminomethyldihydrolipoyl]-L-lysyl-[glycine-cleavage complex H protein] + CO2. The glycine cleavage system catalyzes the degradation of glycine. The P protein binds the alpha-amino group of glycine through its pyridoxal phosphate cofactor; CO(2) is released and the remaining methylamine moiety is then transferred to the lipoamide cofactor of the H protein. The polypeptide is Glycine dehydrogenase (decarboxylating) (Variovorax paradoxus (strain S110)).